The primary structure comprises 296 residues: Acetylglutamate kinase (296 aa).

Substrate contacts are provided by residues 68–69 (GG), Arg90, and Asn193.

Belongs to the acetylglutamate kinase family. ArgB subfamily.

Its subcellular location is the cytoplasm. It catalyses the reaction N-acetyl-L-glutamate + ATP = N-acetyl-L-glutamyl 5-phosphate + ADP. It functions in the pathway amino-acid biosynthesis; L-arginine biosynthesis; N(2)-acetyl-L-ornithine from L-glutamate: step 2/4. Its function is as follows. Catalyzes the ATP-dependent phosphorylation of N-acetyl-L-glutamate. In Acidothermus cellulolyticus (strain ATCC 43068 / DSM 8971 / 11B), this protein is Acetylglutamate kinase.